We begin with the raw amino-acid sequence, 158 residues long: Large ribosomal subunit protein uL16 (158 aa).

This sequence belongs to the universal ribosomal protein uL16 family. Part of the 50S ribosomal subunit.

In terms of biological role, binds 23S rRNA and is also seen to make contacts with the A and possibly P site tRNAs. In Synechococcus sp. (strain CC9902), this protein is Large ribosomal subunit protein uL16.